The chain runs to 401 residues: L-rhamnonate dehydratase (401 aa).

Residues His29 and Arg55 each contribute to the substrate site. Positions 222, 248, and 276 each coordinate Mg(2+). Residue His325 is the Proton acceptor of the active site. Glu345 provides a ligand contact to substrate.

This sequence belongs to the mandelate racemase/muconate lactonizing enzyme family. RhamD subfamily. As to quaternary structure, homooctamer; tetramer of dimers. The cofactor is Mg(2+).

The enzyme catalyses L-rhamnonate = 2-dehydro-3-deoxy-L-rhamnonate + H2O. In terms of biological role, catalyzes the dehydration of L-rhamnonate to 2-keto-3-deoxy-L-rhamnonate (KDR). The sequence is that of L-rhamnonate dehydratase from Klebsiella pneumoniae (strain 342).